A 98-amino-acid chain; its full sequence is NADH-ubiquinone oxidoreductase chain 4L (98 aa).

3 consecutive transmembrane segments (helical) span residues 1 to 21 (MSMVYMNIMMAFTVSLVGLLM), 29 to 49 (SLLCLEGMMLSLFVMAALTIL), and 61 to 81 (IILLVFAACEAALGLSLLVMV).

Belongs to the complex I subunit 4L family. Core subunit of respiratory chain NADH dehydrogenase (Complex I) which is composed of 45 different subunits.

Its subcellular location is the mitochondrion inner membrane. The catalysed reaction is a ubiquinone + NADH + 5 H(+)(in) = a ubiquinol + NAD(+) + 4 H(+)(out). Core subunit of the mitochondrial membrane respiratory chain NADH dehydrogenase (Complex I) which catalyzes electron transfer from NADH through the respiratory chain, using ubiquinone as an electron acceptor. Part of the enzyme membrane arm which is embedded in the lipid bilayer and involved in proton translocation. This Bos indicus (Zebu) protein is NADH-ubiquinone oxidoreductase chain 4L (MT-ND4L).